The following is a 509-amino-acid chain: Maturase K (509 aa).

The protein belongs to the intron maturase 2 family. MatK subfamily.

It localises to the plastid. The protein localises to the chloroplast. Usually encoded in the trnK tRNA gene intron. Probably assists in splicing its own and other chloroplast group II introns. This is Maturase K from Chamaecyparis obtusa (Hinoki false-cypress).